A 242-amino-acid chain; its full sequence is Small ribosomal subunit protein uS3 (242 aa).

A KH type-2 domain is found at 39-110 (IRKFIHKKYG…QVRINVVEVE (72 aa)). The disordered stretch occupies residues 216–242 (QPMPVGAAPRRRASRRPQQFEDRSNEG). Basic and acidic residues predominate over residues 233–242 (QQFEDRSNEG).

This sequence belongs to the universal ribosomal protein uS3 family. In terms of assembly, part of the 30S ribosomal subunit. Forms a tight complex with proteins S10 and S14.

In terms of biological role, binds the lower part of the 30S subunit head. Binds mRNA in the 70S ribosome, positioning it for translation. This is Small ribosomal subunit protein uS3 from Synechococcus sp. (strain CC9605).